The chain runs to 90 residues: MSRTVFCQRLKKEGPGLDFQLYPGELGKRIFDNISKEAWTEWQKKQVMLINEKKLNMMNLEHRQLLEKEMVSYLFEAGEVAIDGYTPPSQ.

It belongs to the Fe(2+)-trafficking protein family.

Functionally, could be a mediator in iron transactions between iron acquisition and iron-requiring processes, such as synthesis and/or repair of Fe-S clusters in biosynthetic enzymes. The protein is Probable Fe(2+)-trafficking protein of Aeromonas salmonicida (strain A449).